Here is a 213-residue protein sequence, read N- to C-terminus: Protein DMP3 (213 aa).

The disordered stretch occupies residues 1 to 27 (MSSPSSLTQRNPTSSQEQSESVPQLRR). 4 helical membrane-spanning segments follow: residues 45–65 (LANL…PVFT), 74–94 (TQVL…LSSF), 136–156 (IRII…AVAL), and 176–196 (VLDI…LVFP).

The protein belongs to the plant DMP1 protein family. As to expression, expressed in leaves, siliques and roots (e.g. root hairs).

The protein localises to the endoplasmic reticulum membrane. Involved in membrane remodeling. This Arabidopsis thaliana (Mouse-ear cress) protein is Protein DMP3.